An 822-amino-acid polypeptide reads, in one-letter code: Fibroblast growth factor receptor 1 (822 aa).

The signal sequence occupies residues 1 to 21 (MWGWRGLLFWAVLVTATLCTA). Residues 22–376 (RPAPTLPEQA…AVMTSPLYLE (355 aa)) lie on the Extracellular side of the membrane. The Ig-like C2-type 1 domain maps to 25–119 (PTLPEQAQPW…DTTYFSVNVS (95 aa)). An intrachain disulfide couples Cys55 to Cys101. 2 N-linked (GlcNAc...) asparagine glycosylation sites follow: Asn77 and Asn117. Residues 120 to 162 (DALPSSEDDDDDDDSSSEEKETDNTKPNRRPVAPYWTSPEKME) are disordered. The span at 125 to 135 (SEDDDDDDDSS) shows a compositional bias: acidic residues. Basic and acidic residues predominate over residues 136-145 (SEEKETDNTK). 2 Ig-like C2-type domains span residues 158–246 (PEKM…YQLD) and 255–357 (PILQ…AWLT). The interval 160–177 (KMEKKLHAVPAAKTVKFK) is heparin-binding. Cysteines 178 and 230 form a disulfide. N-linked (GlcNAc...) asparagine glycans are attached at residues Asn227, Asn240, Asn264, Asn296, Asn317, and Asn330. Cys277 and Cys341 are disulfide-bonded. The chain crosses the membrane as a helical span at residues 377 to 397 (IIIYCTGAFLISCMVGSVIIY). At 398–822 (KMKSGTKKSD…QLANGGLNRR (425 aa)) the chain is on the cytoplasmic side. Position 463 is a phosphotyrosine; by autocatalysis (Tyr463). A Protein kinase domain is found at 478–767 (LVLGKPLGEG…VALTSNQEYL (290 aa)). ATP is bound by residues 484 to 490 (LGEGCFG), Lys514, 562 to 564 (EYA), and Asn568. Phosphotyrosine; by autocatalysis is present on residues Tyr583 and Tyr585. Catalysis depends on Asp623, which acts as the Proton acceptor. ATP-binding residues include Arg627 and Asp641. A phosphotyrosine; by autocatalysis mark is found at Tyr653, Tyr654, Tyr730, and Tyr766. A disordered region spans residues 770–822 (SMPLDQDSPSFPDTRSSTCSSGEDSVFSHEPFPEEPCLPRHPTQLANGGLNRR). Residues 776–792 (DSPSFPDTRSSTCSSGE) show a composition bias toward polar residues.

The protein belongs to the protein kinase superfamily. Tyr protein kinase family. Fibroblast growth factor receptor subfamily. In terms of assembly, monomer. Homodimer after ligand binding. Interacts predominantly with FGF1 and FGF2, but can also interact with FGF3, FGF4, FGF5, FGF6, FGF8, FGF10, FGF19, FGF21, FGF22 and FGF23 (in vitro). Ligand specificity is determined by tissue-specific expression of isoforms, and differences in the third Ig-like domain are crucial for ligand specificity. Affinity for fibroblast growth factors (FGFs) is increased by heparan sulfate glycosaminoglycans that function as coreceptors. Likewise, KLB increases the affinity for FGF19, FGF21 and FGF23. Interacts (phosphorylated on Tyr-766) with PLCG1 (via SH2 domains). Interacts with FRS2. Interacts (via C-terminus) with NEDD4 (via WW3 domain). Interacts with RPS6KA1. Interacts with KL. Interacts with SHB (via SH2 domain) and GRB10. Interacts with ANOS1; this interaction does not interfere with FGF2-binding to FGFR1, but prevents binding of heparin-bound FGF2. Interacts with SOX2 and SOX3. Interacts with FLRT1, FLRT2 and FLRT3. Found in a ternary complex with FGF1 and ITGAV:ITGB3. In terms of processing, autophosphorylated. Binding of FGF family members together with heparan sulfate proteoglycan or heparin promotes receptor dimerization and autophosphorylation on tyrosine residues. Autophosphorylation occurs in trans between the two FGFR molecules present in the dimer and proceeds in a highly ordered manner. Initial autophosphorylation at Tyr-653 increases the kinase activity by a factor of 50 to 100. After this, Tyr-583 becomes phosphorylated, followed by phosphorylation of Tyr-463, Tyr-766, Tyr-583 and Tyr-585. In a third stage, Tyr-654 is autophosphorylated, resulting in a further tenfold increase of kinase activity. Phosphotyrosine residues provide docking sites for interacting proteins and so are crucial for FGFR1 function and its regulation. Ubiquitinated. FGFR1 is rapidly ubiquitinated by NEDD4 after autophosphorylation, leading to internalization and lysosomal degradation. CBL is recruited to activated FGFR1 via FRS2 and GRB2, and mediates ubiquitination and subsequent degradation of FGFR1. Post-translationally, N-glycosylated in the endoplasmic reticulum. The N-glycan chains undergo further maturation to an Endo H-resistant form in the Golgi apparatus. In terms of tissue distribution, expressed in the parathyroid.

Its subcellular location is the cell membrane. The protein localises to the nucleus. It localises to the cytoplasm. It is found in the cytosol. The protein resides in the cytoplasmic vesicle. It catalyses the reaction L-tyrosyl-[protein] + ATP = O-phospho-L-tyrosyl-[protein] + ADP + H(+). With respect to regulation, present in an inactive conformation in the absence of bound ligand. Ligand binding leads to dimerization and activation by sequential autophosphorylation on tyrosine residues. Tyrosine-protein kinase that acts as a cell-surface receptor for fibroblast growth factors and plays an essential role in the regulation of embryonic development, cell proliferation, differentiation and migration. Required for normal mesoderm patterning and correct axial organization during embryonic development, normal skeletogenesis and normal development of the gonadotropin-releasing hormone (GnRH) neuronal system. Phosphorylates PLCG1, FRS2, GAB1 and SHB. Ligand binding leads to the activation of several signaling cascades. Activation of PLCG1 leads to the production of the cellular signaling molecules diacylglycerol and inositol 1,4,5-trisphosphate. Phosphorylation of FRS2 triggers recruitment of GRB2, GAB1, PIK3R1 and SOS1, and mediates activation of RAS, MAPK1/ERK2, MAPK3/ERK1 and the MAP kinase signaling pathway, as well as of the AKT1 signaling pathway. Promotes phosphorylation of SHC1, STAT1 and PTPN11/SHP2. In the nucleus, enhances RPS6KA1 and CREB1 activity and contributes to the regulation of transcription. FGFR1 signaling is down-regulated by IL17RD/SEF, and by FGFR1 ubiquitination, internalization and degradation. In Rattus norvegicus (Rat), this protein is Fibroblast growth factor receptor 1 (Fgfr1).